The primary structure comprises 416 residues: Solute carrier family 25 member 46 (416 aa).

Basic and acidic residues predominate over residues 1–13 (MQPRRPDRFDGLE). The interval 1–91 (MQPRRPDRFD…GEESSSSSSG (91 aa)) is disordered. Residues 37–49 (SFSSSGDLSQHWV) show a composition bias toward polar residues. The segment covering 82 to 91 (GEESSSSSSG) has biased composition (low complexity). Residues 94–185 (HLNRFAGFGI…GMLSEFTHLP (92 aa)) form a Solcar 1 repeat. Helical transmembrane passes span 101–121 (FGIG…CIVL), 161–181 (MGST…LSEF), 197–217 (IGGH…FYSA), 256–276 (LLPL…HYII), 312–332 (FPEL…LYPL), and 381–401 (LGFY…AIVL). A Solcar 2 repeat occupies 309–414 (EDYFPELIAN…KIIYSSVVQT (106 aa)).

Belongs to the mitochondrial carrier (TC 2.A.29) family.

Its subcellular location is the mitochondrion outer membrane. In terms of biological role, may play a role in mitochondrial dynamics by controlling mitochondrial membrane fission. The polypeptide is Solute carrier family 25 member 46 (slc25a46) (Xenopus tropicalis (Western clawed frog)).